A 199-amino-acid chain; its full sequence is Superoxide dismutase [Mn] 2 (199 aa).

Mn(2+) is bound by residues H28, H75, D157, and H161.

It belongs to the iron/manganese superoxide dismutase family. Requires Mn(2+) as cofactor.

It catalyses the reaction 2 superoxide + 2 H(+) = H2O2 + O2. In terms of biological role, destroys superoxide anion radicals which are normally produced within the cells and which are toxic to biological systems. The polypeptide is Superoxide dismutase [Mn] 2 (sod2) (Haloferax volcanii (strain ATCC 29605 / DSM 3757 / JCM 8879 / NBRC 14742 / NCIMB 2012 / VKM B-1768 / DS2) (Halobacterium volcanii)).